An 84-amino-acid chain; its full sequence is GTP cyclohydrolase 1 feedback regulatory protein (84 aa).

This sequence belongs to the GFRP family. As to quaternary structure, homopentamer. Forms a complex with GCH1 where a GCH1 homodecamer is sandwiched by two GFRP homopentamers.

The protein localises to the nucleus. It is found in the nucleus membrane. The protein resides in the cytoplasm. It localises to the cytosol. In terms of biological role, mediates tetrahydrobiopterin inhibition of GTP cyclohydrolase 1. This Xenopus tropicalis (Western clawed frog) protein is GTP cyclohydrolase 1 feedback regulatory protein (gchfr).